Here is a 269-residue protein sequence, read N- to C-terminus: Undecaprenyl-diphosphatase (269 aa).

The next 8 helical transmembrane spans lie at 4 to 24, 50 to 70, 86 to 106, 113 to 133, 146 to 166, 186 to 206, 220 to 240, and 246 to 266; these read IELW…WLPI, LWLH…PYWL, LFAI…YKVL, ATGD…GLLL, VNVV…IPGI, AVWL…ALEL, WMVT…EVLL, and LDFS…PLAA.

The protein belongs to the UppP family.

The protein localises to the cell membrane. It carries out the reaction di-trans,octa-cis-undecaprenyl diphosphate + H2O = di-trans,octa-cis-undecaprenyl phosphate + phosphate + H(+). Its function is as follows. Catalyzes the dephosphorylation of undecaprenyl diphosphate (UPP). In Methanopyrus kandleri (strain AV19 / DSM 6324 / JCM 9639 / NBRC 100938), this protein is Undecaprenyl-diphosphatase.